A 445-amino-acid chain; its full sequence is MNWSLQLRSFILCWALLLLSPTGLAQYTATRDNCCILDERFGSYCPTTCGISDFLNSYQTDVDTDLQTLENILQRAENRTTEAKELIKAIQVYYNPDQPPKPGMIEGATQKSKKMVEEILKYEALLLTHESSIRYLQDIYTSNKQKITNLKQKVAQLEAQCQEPCKDSVRIHDTTGKDCQDIANKGAKESGLYFIRPLKATQQFLVYCEIDGSGNGWTVLQKRLDGSVDFKKNWIQYKEGFGHLSPTGTTEFWLGNEKIHLISMQSTIPYALRIQLKDWSGRTSTADYAMFRVGPESDKYRLTYAYFIGGDAGDAFDGYDFGDDPSDKFFTSHNGMHFSTWDNDNDKFEGNCAEQDGSGWWMNKCHAGHLNGVYYQGGTYSKSSTPNGYDNGIIWATWKTRWYSMKETTMKIIPFNRLSIGDGQQHHMGGSKQVSVEHEVDVEYP.

The N-terminal stretch at 1–25 (MNWSLQLRSFILCWALLLLSPTGLA) is a signal peptide. Asparagine 78 carries an N-linked (GlcNAc...) asparagine glycan. The region spanning 170–416 (RIHDTTGKDC…ETTMKIIPFN (247 aa)) is the Fibrinogen C-terminal domain. Residues cysteine 179 and cysteine 208 are joined by a disulfide bond. Positions 344, 346, and 350 each coordinate Ca(2+). Cysteine 352 and cysteine 365 are disulfide-bonded. The gamma-chain polymerization, binding amino end of another fibrin alpha chain stretch occupies residues 400–422 (TRWYSMKETTMKIIPFNRLSIGD). Glutamine 424 is covalently cross-linked (Isoglutamyl lysine isopeptide (Gln-Lys) (interchain with K-432)). Positions 424–445 (QQHHMGGSKQVSVEHEVDVEYP) are disordered. Serine 431 is modified (phosphoserine). An Isoglutamyl lysine isopeptide (Lys-Gln) (interchain with Q-424) cross-link involves residue lysine 432. Positions 435–445 (SVEHEVDVEYP) are enriched in basic and acidic residues.

As to quaternary structure, heterohexamer; disulfide linked. Contains 2 sets of 3 non-identical chains (alpha, beta and gamma). The 2 heterotrimers are in head to head conformation with the N-termini in a small central domain. Post-translationally, conversion of fibrinogen to fibrin is triggered by thrombin, which cleaves fibrinopeptides A and B from alpha and beta chains, and thus exposes the N-terminal polymerization sites responsible for the formation of the soft clot. The soft clot is converted into the hard clot by factor XIIIA which catalyzes the epsilon-(gamma-glutamyl)lysine cross-linking between gamma chains (stronger) and between alpha chains (weaker) of different monomers.

The protein resides in the secreted. In terms of biological role, together with fibrinogen alpha (FGA) and fibrinogen beta (FGB), polymerizes to form an insoluble fibrin matrix. Has a major function in hemostasis as one of the primary components of blood clots. In addition, functions during the early stages of wound repair to stabilize the lesion and guide cell migration during re-epithelialization. Was originally thought to be essential for platelet aggregation, based on in vitro studies using anticoagulated blood. However, subsequent studies have shown that it is not absolutely required for thrombus formation in vivo. Enhances expression of SELP in activated platelets via an ITGB3-dependent pathway. Maternal fibrinogen is essential for successful pregnancy. Fibrin deposition is also associated with infection, where it protects against IFNG-mediated hemorrhage. May also facilitate the antibacterial immune response via both innate and T-cell mediated pathways. The polypeptide is Fibrinogen gamma chain (Fgg) (Rattus norvegicus (Rat)).